The sequence spans 499 residues: Cysteine--tRNA ligase (499 aa).

Cys30 is a Zn(2+) binding site. A 'HIGH' region motif is present at residues 32 to 42 (PTVYDRAHLGN). 3 residues coordinate Zn(2+): Cys221, His246, and Glu250. Positions 279 to 283 (KMSKS) match the 'KMSKS' region motif. Residue Lys282 coordinates ATP.

It belongs to the class-I aminoacyl-tRNA synthetase family. Monomer. Zn(2+) is required as a cofactor.

The protein localises to the cytoplasm. It catalyses the reaction tRNA(Cys) + L-cysteine + ATP = L-cysteinyl-tRNA(Cys) + AMP + diphosphate. The polypeptide is Cysteine--tRNA ligase (Cereibacter sphaeroides (strain ATCC 17023 / DSM 158 / JCM 6121 / CCUG 31486 / LMG 2827 / NBRC 12203 / NCIMB 8253 / ATH 2.4.1.) (Rhodobacter sphaeroides)).